The following is a 213-amino-acid chain: Orotate phosphoribosyltransferase (213 aa).

Lysine 26 is a 5-phospho-alpha-D-ribose 1-diphosphate binding site. Residue 34–35 (FF) coordinates orotate. Residues 72–73 (YK), arginine 99, lysine 100, lysine 103, histidine 105, and 124–132 (DDVITAGTA) contribute to the 5-phospho-alpha-D-ribose 1-diphosphate site. 2 residues coordinate orotate: threonine 128 and arginine 156.

It belongs to the purine/pyrimidine phosphoribosyltransferase family. PyrE subfamily. Homodimer. Mg(2+) serves as cofactor.

It catalyses the reaction orotidine 5'-phosphate + diphosphate = orotate + 5-phospho-alpha-D-ribose 1-diphosphate. It functions in the pathway pyrimidine metabolism; UMP biosynthesis via de novo pathway; UMP from orotate: step 1/2. Functionally, catalyzes the transfer of a ribosyl phosphate group from 5-phosphoribose 1-diphosphate to orotate, leading to the formation of orotidine monophosphate (OMP). The polypeptide is Orotate phosphoribosyltransferase (Pseudomonas aeruginosa (strain UCBPP-PA14)).